The primary structure comprises 615 residues: Membrane protein insertase YidC (615 aa).

A run of 5 helical transmembrane segments spans residues 9–29 (LMFIVSAFAILIGYQFFVLGP), 384–404 (LVGNFGLAILLLTVVLKLVLY), 458–478 (LPMLIQIPVFYALYKVLTVTI), 516–536 (LIGAMIAHLGVWPLLYGFTMW), and 556–576 (WFPVIFTFTLSGFAVGLVIYW).

Belongs to the OXA1/ALB3/YidC family. Type 1 subfamily. As to quaternary structure, interacts with the Sec translocase complex via SecD. Specifically interacts with transmembrane segments of nascent integral membrane proteins during membrane integration.

It localises to the cell inner membrane. Required for the insertion and/or proper folding and/or complex formation of integral membrane proteins into the membrane. Involved in integration of membrane proteins that insert both dependently and independently of the Sec translocase complex, as well as at least some lipoproteins. Aids folding of multispanning membrane proteins. The polypeptide is Membrane protein insertase YidC (Caulobacter vibrioides (strain ATCC 19089 / CIP 103742 / CB 15) (Caulobacter crescentus)).